A 456-amino-acid polypeptide reads, in one-letter code: RUN domain-containing protein 3B (456 aa).

The disordered stretch occupies residues M1–S26. Gly residues predominate over residues G8 to K21. The residue at position 13 (R13) is an Omega-N-methylarginine. In terms of domain architecture, RUN spans D57–E189. Phosphoserine is present on residues S215 and S216. The stretch at A300–N325 forms a coiled coil. A disordered region spans residues S382–I405.

This sequence belongs to the RUNDC3 family. As to quaternary structure, interacts with RAP2A.

The sequence is that of RUN domain-containing protein 3B (RUNDC3B) from Macaca fascicularis (Crab-eating macaque).